We begin with the raw amino-acid sequence, 331 residues long: Major outer membrane protein P.IB (331 aa).

Positions 1-19 (MKKSLIALTLAALPVAAMA) are cleaved as a signal peptide.

It belongs to the Gram-negative porin family. In terms of assembly, homotrimer.

Its subcellular location is the cell outer membrane. In terms of biological role, serves as a slightly cation selective porin. The polypeptide is Major outer membrane protein P.IB (porB) (Neisseria meningitidis serogroup B).